We begin with the raw amino-acid sequence, 327 residues long: Phenylalanine--tRNA ligase alpha subunit (327 aa).

Residue glutamate 252 participates in Mg(2+) binding.

Belongs to the class-II aminoacyl-tRNA synthetase family. Phe-tRNA synthetase alpha subunit type 1 subfamily. In terms of assembly, tetramer of two alpha and two beta subunits. It depends on Mg(2+) as a cofactor.

It is found in the cytoplasm. It carries out the reaction tRNA(Phe) + L-phenylalanine + ATP = L-phenylalanyl-tRNA(Phe) + AMP + diphosphate + H(+). The sequence is that of Phenylalanine--tRNA ligase alpha subunit from Pectobacterium atrosepticum (strain SCRI 1043 / ATCC BAA-672) (Erwinia carotovora subsp. atroseptica).